The following is a 453-amino-acid chain: Bifunctional protein GlmU (453 aa).

The interval Met1 to Arg226 is pyrophosphorylase. Residues Leu7 to Gly10, Lys21, Gln73, and Gly78 to Thr79 contribute to the UDP-N-acetyl-alpha-D-glucosamine site. Asp103 contributes to the Mg(2+) binding site. 4 residues coordinate UDP-N-acetyl-alpha-D-glucosamine: Gly140, Glu155, Asn170, and Asn224. Residue Asn224 participates in Mg(2+) binding. Positions Lys227–Gln247 are linker. The segment at Gly248–Lys453 is N-acetyltransferase. 2 residues coordinate UDP-N-acetyl-alpha-D-glucosamine: Arg329 and Lys347. The active-site Proton acceptor is His359. UDP-N-acetyl-alpha-D-glucosamine contacts are provided by Tyr362 and Asn373. Acetyl-CoA is bound by residues Ala376, Asn382–Tyr383, Ala419, and Arg436.

It in the N-terminal section; belongs to the N-acetylglucosamine-1-phosphate uridyltransferase family. This sequence in the C-terminal section; belongs to the transferase hexapeptide repeat family. In terms of assembly, homotrimer. Mg(2+) is required as a cofactor.

The protein localises to the cytoplasm. It catalyses the reaction alpha-D-glucosamine 1-phosphate + acetyl-CoA = N-acetyl-alpha-D-glucosamine 1-phosphate + CoA + H(+). The catalysed reaction is N-acetyl-alpha-D-glucosamine 1-phosphate + UTP + H(+) = UDP-N-acetyl-alpha-D-glucosamine + diphosphate. It functions in the pathway nucleotide-sugar biosynthesis; UDP-N-acetyl-alpha-D-glucosamine biosynthesis; N-acetyl-alpha-D-glucosamine 1-phosphate from alpha-D-glucosamine 6-phosphate (route II): step 2/2. Its pathway is nucleotide-sugar biosynthesis; UDP-N-acetyl-alpha-D-glucosamine biosynthesis; UDP-N-acetyl-alpha-D-glucosamine from N-acetyl-alpha-D-glucosamine 1-phosphate: step 1/1. It participates in bacterial outer membrane biogenesis; LPS lipid A biosynthesis. Its function is as follows. Catalyzes the last two sequential reactions in the de novo biosynthetic pathway for UDP-N-acetylglucosamine (UDP-GlcNAc). The C-terminal domain catalyzes the transfer of acetyl group from acetyl coenzyme A to glucosamine-1-phosphate (GlcN-1-P) to produce N-acetylglucosamine-1-phosphate (GlcNAc-1-P), which is converted into UDP-GlcNAc by the transfer of uridine 5-monophosphate (from uridine 5-triphosphate), a reaction catalyzed by the N-terminal domain. The sequence is that of Bifunctional protein GlmU from Rippkaea orientalis (strain PCC 8801 / RF-1) (Cyanothece sp. (strain PCC 8801)).